The chain runs to 323 residues: o-succinylbenzoate synthase (323 aa).

Residue lysine 134 is the Proton donor of the active site. Aspartate 162, glutamate 191, and aspartate 214 together coordinate Mg(2+). Lysine 236 (proton acceptor) is an active-site residue.

This sequence belongs to the mandelate racemase/muconate lactonizing enzyme family. MenC type 1 subfamily. Requires a divalent metal cation as cofactor.

The catalysed reaction is (1R,6R)-6-hydroxy-2-succinyl-cyclohexa-2,4-diene-1-carboxylate = 2-succinylbenzoate + H2O. It participates in quinol/quinone metabolism; 1,4-dihydroxy-2-naphthoate biosynthesis; 1,4-dihydroxy-2-naphthoate from chorismate: step 4/7. Its pathway is quinol/quinone metabolism; menaquinone biosynthesis. Its function is as follows. Converts 2-succinyl-6-hydroxy-2,4-cyclohexadiene-1-carboxylate (SHCHC) to 2-succinylbenzoate (OSB). The chain is o-succinylbenzoate synthase from Yersinia pseudotuberculosis serotype O:1b (strain IP 31758).